Here is a 286-residue protein sequence, read N- to C-terminus: Quinone oxidoreductase 2 (286 aa).

Residues 6–11 (GATGQL), Arg-33, 73–75 (SSS), 138–143 (GWYSEN), and Arg-171 each bind NADP(+).

This sequence belongs to the NmrA-type oxidoreductase family. In terms of assembly, monomer.

The catalysed reaction is a quinone + NADH + H(+) = a quinol + NAD(+). It carries out the reaction a quinone + NADPH + H(+) = a quinol + NADP(+). Its function is as follows. Quinone oxidoreductase that may play some additional role beyond quinone reduction. Potential redox sensor protein. Overexpression induces retardation of growth. In Escherichia coli (strain K12), this protein is Quinone oxidoreductase 2 (qorB).